A 330-amino-acid polypeptide reads, in one-letter code: Urokinase plasminogen activator surface receptor (330 aa).

An N-terminal signal peptide occupies residues 1–20; that stretch reads MGQPLLLLLLVYTYIPGSWG. UPAR/Ly6 domains lie at 21–112, 113–208, and 209–300; these read LRCL…RNRY, LECA…PPNG, and LQCY…PGKG. 3 cysteine pairs are disulfide-bonded: C23–C44, C26–C32, and C37–C65. A glycan (N-linked (GlcNAc...) asparagine) is linked at N28. N72 carries an N-linked (GlcNAc...) asparagine glycan. 11 cysteine pairs are disulfide-bonded: C91/C96, C115/C142, C118/C125, C135/C164, C170/C187, C188/C193, C211/C239, C214/C222, C232/C258, C264/C282, and C283/C288. N179 and N189 each carry an N-linked (GlcNAc...) asparagine glycan. Residue N279 is glycosylated (N-linked (GlcNAc...) asparagine). A lipid anchor (GPI-anchor amidated glycine) is attached at G300. A propeptide spans 301-330 (removed in mature form); sequence GAPKTSPAHLSFFVSLLLTARLWGATLLCT.

As to quaternary structure, monomer. Interacts (via the UPAR/Ly6 domains) with SRPX2. Interacts with MRC2. Interacts with SORL1 (via N-terminal ectodomain); this interaction decreases PLAUR internalization. The ternary complex composed of PLAUR-PLAU-SERPINE1 also interacts with SORL1. Interacts with CD82; this interaction prevents PLAUR from binding to its high affinity ligand PLAU.

Its subcellular location is the cell membrane. In terms of biological role, acts as a receptor for urokinase plasminogen activator. Plays a role in localizing and promoting plasmin formation. Mediates the proteolysis-independent signal transduction activation effects of U-PA. This is Urokinase plasminogen activator surface receptor (PLAUR) from Bos taurus (Bovine).